Consider the following 176-residue polypeptide: ATP-dependent protease subunit HslV (176 aa).

Residue threonine 2 is part of the active site. The Na(+) site is built by glycine 157, cysteine 160, and threonine 163.

Belongs to the peptidase T1B family. HslV subfamily. In terms of assembly, a double ring-shaped homohexamer of HslV is capped on each side by a ring-shaped HslU homohexamer. The assembly of the HslU/HslV complex is dependent on binding of ATP.

It is found in the cytoplasm. The enzyme catalyses ATP-dependent cleavage of peptide bonds with broad specificity.. Its activity is regulated as follows. Allosterically activated by HslU binding. In terms of biological role, protease subunit of a proteasome-like degradation complex believed to be a general protein degrading machinery. In Pseudomonas putida (strain ATCC 47054 / DSM 6125 / CFBP 8728 / NCIMB 11950 / KT2440), this protein is ATP-dependent protease subunit HslV.